The following is a 296-amino-acid chain: 4-hydroxybenzoate octaprenyltransferase (296 aa).

Helical transmembrane passes span 28 to 48 (PIGI…AGLG), 52 to 72 (LANV…GCCI), 102 to 122 (ALAL…CTNS), 145 to 167 (TYYP…FTAA), 174 to 196 (SAWL…YAMV), 219 to 239 (MIIL…GSRF), 241 to 261 (LGGW…WEYW), and 275 to 295 (FLHN…DYAL).

It belongs to the UbiA prenyltransferase family. Requires Mg(2+) as cofactor.

Its subcellular location is the cell inner membrane. The enzyme catalyses all-trans-octaprenyl diphosphate + 4-hydroxybenzoate = 4-hydroxy-3-(all-trans-octaprenyl)benzoate + diphosphate. The protein operates within cofactor biosynthesis; ubiquinone biosynthesis. Its function is as follows. Catalyzes the prenylation of para-hydroxybenzoate (PHB) with an all-trans polyprenyl group. Mediates the second step in the final reaction sequence of ubiquinone-8 (UQ-8) biosynthesis, which is the condensation of the polyisoprenoid side chain with PHB, generating the first membrane-bound Q intermediate 3-octaprenyl-4-hydroxybenzoate. The chain is 4-hydroxybenzoate octaprenyltransferase from Pseudomonas putida (strain W619).